The sequence spans 89 residues: Cell division topological specificity factor (89 aa).

This sequence belongs to the MinE family.

Prevents the cell division inhibition by proteins MinC and MinD at internal division sites while permitting inhibition at polar sites. This ensures cell division at the proper site by restricting the formation of a division septum at the midpoint of the long axis of the cell. The protein is Cell division topological specificity factor of Proteus mirabilis (strain HI4320).